The following is a 227-amino-acid chain: Uracil-DNA glycosylase 2 (227 aa).

Asp-67 serves as the catalytic Proton acceptor.

The protein belongs to the uracil-DNA glycosylase (UDG) superfamily. UNG family.

The protein resides in the cytoplasm. The enzyme catalyses Hydrolyzes single-stranded DNA or mismatched double-stranded DNA and polynucleotides, releasing free uracil.. In terms of biological role, excises uracil residues from the DNA which can arise as a result of misincorporation of dUMP residues by DNA polymerase or due to deamination of cytosine. The sequence is that of Uracil-DNA glycosylase 2 (ung2) from Streptomyces coelicolor (strain ATCC BAA-471 / A3(2) / M145).